A 527-amino-acid chain; its full sequence is Pentatricopeptide repeat-containing protein At4g25270, chloroplastic (527 aa).

Residues 1–47 (MVSIVVHKPSFSYPSVSSSSMKKKPRHHQQLKQHRQNQYNNNGFTSL) constitute a chloroplast transit peptide. The segment at 12–44 (SYPSVSSSSMKKKPRHHQQLKQHRQNQYNNNGF) is disordered. Basic residues predominate over residues 21-35 (MKKKPRHHQQLKQHR). 10 PPR repeats span residues 126–156 (NLGISSKLVRLYASCGYAEVAHEVFDRMSKR), 159–193 (SPFAWNSLISGYAELGQYEDAMALYFQMAEDGVKP), 194–228 (DRFTFPRVLKACGGIGSVQIGEAIHRDLVKEGFGY), 229–259 (DVYVLNALVVMYAKCGDIVKARNVFDMIPHK), 260–294 (DYVSWNSMLTGYLHHGLLHEALDIFRLMVQNGIEP), 295–326 (DKVAISSVLARVLSFKHGRQLHGWVIRRGMEW), 327–361 (ELSVANALIVLYSKRGQLGQACFIFDQMLERDTVS), 367–389 (SAHSKNSNGLKYFEQMHRANAKP), 390–425 (DGITFVSVLSLCANTGMVEDGERLFSLMSKEYGIDP), and 426–457 (KMEHYACMVNLYGRAGMMEEAYSMIVQEMGLE). A type E motif; degenerate region spans residues 462–527 (VWGALLYACY…QMMVDRGLET (66 aa)).

This sequence belongs to the PPR family. PCMP-E subfamily.

The protein resides in the plastid. It localises to the chloroplast. The polypeptide is Pentatricopeptide repeat-containing protein At4g25270, chloroplastic (PCMP-E53) (Arabidopsis thaliana (Mouse-ear cress)).